A 549-amino-acid polypeptide reads, in one-letter code: Glucose-6-phosphate isomerase (549 aa).

E352 functions as the Proton donor in the catalytic mechanism. Residues H383 and K511 contribute to the active site.

The protein belongs to the GPI family.

The protein localises to the cytoplasm. The catalysed reaction is alpha-D-glucose 6-phosphate = beta-D-fructose 6-phosphate. The protein operates within carbohydrate biosynthesis; gluconeogenesis. It functions in the pathway carbohydrate degradation; glycolysis; D-glyceraldehyde 3-phosphate and glycerone phosphate from D-glucose: step 2/4. Functionally, catalyzes the reversible isomerization of glucose-6-phosphate to fructose-6-phosphate. This Methylocella silvestris (strain DSM 15510 / CIP 108128 / LMG 27833 / NCIMB 13906 / BL2) protein is Glucose-6-phosphate isomerase.